The chain runs to 200 residues: Inner membrane-spanning protein YciB (200 aa).

Helical transmembrane passes span 7–27 (HPLF…VVNA), 32–52 (FAAT…SYVV), 56–76 (VPLM…LTLV), 93–113 (LFAA…AIMF), 126–146 (ILTF…EIIW), and 153–173 (FWVG…AIAQ).

The protein belongs to the YciB family.

It is found in the cell inner membrane. In terms of biological role, plays a role in cell envelope biogenesis, maintenance of cell envelope integrity and membrane homeostasis. In Bradyrhizobium sp. (strain BTAi1 / ATCC BAA-1182), this protein is Inner membrane-spanning protein YciB.